Reading from the N-terminus, the 353-residue chain is S-adenosylmethionine:tRNA ribosyltransferase-isomerase (353 aa).

Belongs to the QueA family. Monomer.

The protein localises to the cytoplasm. It catalyses the reaction 7-aminomethyl-7-carbaguanosine(34) in tRNA + S-adenosyl-L-methionine = epoxyqueuosine(34) in tRNA + adenine + L-methionine + 2 H(+). It functions in the pathway tRNA modification; tRNA-queuosine biosynthesis. In terms of biological role, transfers and isomerizes the ribose moiety from AdoMet to the 7-aminomethyl group of 7-deazaguanine (preQ1-tRNA) to give epoxyqueuosine (oQ-tRNA). This Marinomonas sp. (strain MWYL1) protein is S-adenosylmethionine:tRNA ribosyltransferase-isomerase.